The following is a 164-amino-acid chain: Phosphopantetheine adenylyltransferase (164 aa).

Ser-10 serves as a coordination point for substrate. ATP-binding positions include 10–11 (SF) and His-18. Residues Lys-42, Leu-74, and Arg-88 each contribute to the substrate site. Residues 89–91 (GLR), Glu-99, and 124–130 (YSFLSSS) contribute to the ATP site.

The protein belongs to the bacterial CoaD family. As to quaternary structure, homohexamer. The cofactor is Mg(2+).

The protein resides in the cytoplasm. It carries out the reaction (R)-4'-phosphopantetheine + ATP + H(+) = 3'-dephospho-CoA + diphosphate. The protein operates within cofactor biosynthesis; coenzyme A biosynthesis; CoA from (R)-pantothenate: step 4/5. Its function is as follows. Reversibly transfers an adenylyl group from ATP to 4'-phosphopantetheine, yielding dephospho-CoA (dPCoA) and pyrophosphate. In Exiguobacterium sp. (strain ATCC BAA-1283 / AT1b), this protein is Phosphopantetheine adenylyltransferase.